The primary structure comprises 228 residues: Transcription termination/antitermination protein NusG (228 aa).

The protein belongs to the NusG family.

In terms of biological role, participates in transcription elongation, termination and antitermination. This Mycobacterium leprae (strain TN) protein is Transcription termination/antitermination protein NusG.